Consider the following 210-residue polypeptide: Guanylate kinase (210 aa).

Positions 5–183 (GILFVISAPS…AVEEFKSIIL (179 aa)) constitute a Guanylate kinase-like domain. ATP is bound at residue 12 to 19 (APSGAGKT).

The protein belongs to the guanylate kinase family.

It is found in the cytoplasm. The enzyme catalyses GMP + ATP = GDP + ADP. In terms of biological role, essential for recycling GMP and indirectly, cGMP. The sequence is that of Guanylate kinase from Syntrophotalea carbinolica (strain DSM 2380 / NBRC 103641 / GraBd1) (Pelobacter carbinolicus).